The primary structure comprises 220 residues: Protein-L-isoaspartate O-methyltransferase (220 aa).

Residue Ser-67 is part of the active site.

Belongs to the methyltransferase superfamily. L-isoaspartyl/D-aspartyl protein methyltransferase family.

The protein localises to the cytoplasm. It carries out the reaction [protein]-L-isoaspartate + S-adenosyl-L-methionine = [protein]-L-isoaspartate alpha-methyl ester + S-adenosyl-L-homocysteine. Its function is as follows. Catalyzes the methyl esterification of L-isoaspartyl residues in peptides and proteins that result from spontaneous decomposition of normal L-aspartyl and L-asparaginyl residues. It plays a role in the repair and/or degradation of damaged proteins. This is Protein-L-isoaspartate O-methyltransferase from Chlorobium phaeobacteroides (strain BS1).